We begin with the raw amino-acid sequence, 321 residues long: 5,10-methylenetetrahydromethanopterin reductase (321 aa).

Belongs to the mer family.

The protein resides in the cytoplasm. The catalysed reaction is 5-methyl-5,6,7,8-tetrahydromethanopterin + oxidized coenzyme F420-(gamma-L-Glu)(n) + H(+) = 5,10-methylenetetrahydromethanopterin + reduced coenzyme F420-(gamma-L-Glu)(n). Its pathway is one-carbon metabolism; methanogenesis from CO(2); methyl-coenzyme M from 5,10-methylene-5,6,7,8-tetrahydromethanopterin: step 1/2. Catalyzes the reversible reduction of methylene-H(4)MPT to methyl-H(4)MPT. The protein is 5,10-methylenetetrahydromethanopterin reductase of Methanothermobacter thermautotrophicus (strain ATCC 29096 / DSM 1053 / JCM 10044 / NBRC 100330 / Delta H) (Methanobacterium thermoautotrophicum).